Consider the following 629-residue polypeptide: Arginine--tRNA ligase (629 aa).

Positions 128-138 match the 'HIGH' region motif; the sequence is VNPTKPLHMGH.

It belongs to the class-I aminoacyl-tRNA synthetase family.

It localises to the cytoplasm. The catalysed reaction is tRNA(Arg) + L-arginine + ATP = L-arginyl-tRNA(Arg) + AMP + diphosphate. In Pyrococcus furiosus (strain ATCC 43587 / DSM 3638 / JCM 8422 / Vc1), this protein is Arginine--tRNA ligase.